The chain runs to 758 residues: 52 kDa repressor of the inhibitor of the protein kinase (758 aa).

The THAP-type zinc-finger motif lies at 1 to 86 (MPNFCAAPNC…LRDNAIPTIF (86 aa)). Positions 116–141 (QKKIEETSEQEQETNTNAQNPSAEAV) are disordered. Ser563 carries the phosphoserine modification.

As to quaternary structure, interacts with DNAJC3, probably sequestring it.

Upstream regulator of interferon-induced serine/threonine protein kinase R (PKR). May block the PKR-inhibitory function of DNAJC3, resulting in restoration of kinase activity and suppression of cell growth. The chain is 52 kDa repressor of the inhibitor of the protein kinase from Mus musculus (Mouse).